We begin with the raw amino-acid sequence, 519 residues long: Membrane-bound glycerophospholipid O-acyltransferase 2 (519 aa).

6 helical membrane passes run 22-42 (PIDQVNFVVCQLFALLAAVWF), 61-81 (TLLGLYLAFFCFGWYALHFLV), 88-108 (CIMIIAGVESMQQCCFVFALG), 184-204 (FMGILAGPLCSYKDYIAFIEG), 236-256 (LLVCGLSLLFHLTISNMLPVE), and 263-283 (FQATASWPTKATYLYVSLLAA). Active-site residues include asparagine 341 and histidine 372. 3 helical membrane passes run 365-385 (FFLSAIWHGVYPGYYLTFLTG), 415-435 (LITWVATQITISYTVVPFVLL), and 443-463 (FYSSWYYCLHVCSILVLLLLP). The segment at 497 to 519 (FSTMNNVCNQNRDTGSRHSSLTQ) is disordered.

Belongs to the membrane-bound acyltransferase family. Highly expressed in epididymis, brain, testis, and ovary.

Its subcellular location is the endoplasmic reticulum membrane. The catalysed reaction is a 1-acyl-sn-glycero-3-phosphocholine + an acyl-CoA = a 1,2-diacyl-sn-glycero-3-phosphocholine + CoA. It carries out the reaction a 1-acyl-sn-glycero-3-phosphoethanolamine + an acyl-CoA = a 1,2-diacyl-sn-glycero-3-phosphoethanolamine + CoA. It catalyses the reaction a 1-O-(1Z-alkenyl)-sn-glycero-3-phosphocholine + (9Z)-octadecenoyl-CoA = 1-O-(1Z)-alkenyl-2-(9Z)-octadecenoyl-sn-glycero-3-phosphocholine + CoA. The enzyme catalyses a 1-O-(1Z-alkenyl)-sn-glycero-3-phosphoethanolamine + (9Z)-octadecenoyl-CoA = 1-O-(1Z)-alkenyl-2-(9Z)-octadecenoyl-sn-glycero-3-phosphoethanolamine + CoA. The catalysed reaction is 1-octadecanoyl-sn-glycero-3-phosphoethanolamine + (9Z)-octadecenoyl-CoA = 1-octadecanoyl-2-(9Z-octadecenoyl)-sn-glycero-3-phosphoethanolamine + CoA. It carries out the reaction 1-octadecanoyl-sn-glycero-3-phosphocholine + (9Z)-octadecenoyl-CoA = 1-octadecanoyl-2-(9Z-octadecenoyl)-sn-glycero-3-phosphocholine + CoA. It catalyses the reaction 1-(9Z-octadecenoyl)-sn-glycero-3-phosphoethanolamine + (9Z)-octadecenoyl-CoA = 1,2-di-(9Z-octadecenoyl)-sn-glycero-3-phosphoethanolamine + CoA. The enzyme catalyses 1-hexadecanoyl-sn-glycero-3-phosphoethanolamine + (9Z)-octadecenoyl-CoA = 1-hexadecanoyl-2-(9Z-octadecenoyl)-sn-glycero-3-phosphoethanolamine + CoA. The catalysed reaction is 1-hexadecanoyl-sn-glycero-3-phosphocholine + (9Z)-octadecenoyl-CoA = 1-hexadecanoyl-2-(9Z-octadecenoyl)-sn-glycero-3-phosphocholine + CoA. It carries out the reaction (9Z)-hexadecenoyl-CoA + 1-hexadecanoyl-sn-glycero-3-phosphocholine = 1-hexadecanoyl-2-(9Z-hexadecenoyl)-sn-glycero-3-phosphocholine + CoA. It catalyses the reaction 1-hexadecanoyl-sn-glycero-3-phosphoethanolamine + (9Z)-hexadecenoyl-CoA = 1-hexadecanoyl-2-(9Z)-hexadecenoyl-sn-glycero-3-phosphoethanolamine + CoA. The enzyme catalyses (9Z,12Z)-octadecadienoyl-CoA + 1-hexadecanoyl-sn-glycero-3-phosphocholine = 1-hexadecanoyl-2-(9Z,12Z-octadecadienoyl)-sn-glycero-3-phosphocholine + CoA. It functions in the pathway lipid metabolism; phospholipid metabolism. Partially inhibited by thimerosal. Acyltransferase which catalyzes the transfer of an acyl group from an acyl-CoA to a lysophospholipid leading to the production of a phospholipid and participates in the reacylation step of the phospholipid remodeling pathway also known as the Lands cycle. Catalyzes the acylation of lysophosphatidylcholine (1-acyl-sn-glycero-3-phosphocholine or LPC) and to a lesser extend lysophosphatidylethanolamine (1-acyl-sn-glycero-3-phosphoethanolamine or LPE). Does not acylates lysophosphatidic acid (LPA) and lysophosphatidylserine. Prefers oleoyl-CoA as the acyl donor. May be involved in chondrocyte differentiation. This Mus musculus (Mouse) protein is Membrane-bound glycerophospholipid O-acyltransferase 2.